Here is a 141-residue protein sequence, read N- to C-terminus: Hemoglobin subunit alpha-1 (141 aa).

Positions 1–141 (VLSGSDKNNV…VGNVLTAKYR (141 aa)) constitute a Globin domain. Residue H58 participates in O2 binding. H87 serves as a coordination point for heme b.

The protein belongs to the globin family. As to quaternary structure, heterotetramer of two alpha chains and two beta chains. In terms of tissue distribution, red blood cells.

Functionally, involved in oxygen transport from the lung to the various peripheral tissues. This is Hemoglobin subunit alpha-1 from Stercorarius maccormicki (South polar skua).